The chain runs to 260 residues: NifU-like protein C1709.19c (260 aa).

Positions isoleucine 161–valine 231 are nifU.

It belongs to the NifU family.

The sequence is that of NifU-like protein C1709.19c from Schizosaccharomyces pombe (strain 972 / ATCC 24843) (Fission yeast).